A 654-amino-acid polypeptide reads, in one-letter code: Pentatricopeptide repeat-containing protein At4g19191, mitochondrial (654 aa).

A mitochondrion-targeting transit peptide spans 1–65 (MSLIHRRLYR…PFVAKACARL (65 aa)). 13 PPR repeats span residues 86–116 (DVFV…MPER), 117–151 (DATT…EITP), 152–186 (DSVT…GVDV), 187–217 (QVTV…IDRG), 220–254 (TVVS…EFKP), 255–289 (DLST…GTDQ), 290–320 (DIEA…MTSR), 321–355 (TCVS…GEKP), 356–390 (DLVT…GCKR), 392–422 (NVMI…TPEK), 423–457 (TVVT…DYKP), 458–488 (NHIT…MKQV), and 494–524 (GLDH…MSAK). The interval 529–604 (IWGALLNACK…YPGESVIQVN (76 aa)) is type E motif. The segment at 605–635 (GKNHSFTVGEHGHVENEVIYFTLNGLSLFAK) is type E(+) motif.

This sequence belongs to the PPR family. PCMP-E subfamily.

The protein localises to the mitochondrion. This chain is Pentatricopeptide repeat-containing protein At4g19191, mitochondrial (PCMP-E1), found in Arabidopsis thaliana (Mouse-ear cress).